The primary structure comprises 79 residues: Cell division protein ZapB (79 aa).

The stretch at 3–79 (LEVFEKLEAK…QALLGRMEEV (77 aa)) forms a coiled coil. Over residues 36 to 45 (SLTQEVQSAQ) the composition is skewed to polar residues. Positions 36-63 (SLTQEVQSAQHQREELERENNSLKEQQS) are disordered. The span at 46–57 (HQREELERENNS) shows a compositional bias: basic and acidic residues.

It belongs to the ZapB family. As to quaternary structure, homodimer. The ends of the coiled-coil dimer bind to each other, forming polymers. Interacts with FtsZ.

The protein localises to the cytoplasm. Its function is as follows. Non-essential, abundant cell division factor that is required for proper Z-ring formation. It is recruited early to the divisome by direct interaction with FtsZ, stimulating Z-ring assembly and thereby promoting cell division earlier in the cell cycle. Its recruitment to the Z-ring requires functional FtsA or ZipA. The protein is Cell division protein ZapB of Salmonella agona (strain SL483).